The sequence spans 308 residues: ADP-L-glycero-D-manno-heptose-6-epimerase (308 aa).

Residues 10–11 (FI), 31–32 (DN), Lys38, Lys53, 75–79 (EGACS), and Asn92 contribute to the NADP(+) site. Catalysis depends on Tyr139, which acts as the Proton acceptor. Lys143 contributes to the NADP(+) binding site. A substrate-binding site is contributed by Asn168. Residues Val169 and Lys177 each contribute to the NADP(+) site. The active-site Proton acceptor is Lys177. Residues Ser179, His186, 200–203 (FAGS), Arg208, and Tyr271 contribute to the substrate site.

This sequence belongs to the NAD(P)-dependent epimerase/dehydratase family. HldD subfamily. In terms of assembly, homopentamer. It depends on NADP(+) as a cofactor.

It carries out the reaction ADP-D-glycero-beta-D-manno-heptose = ADP-L-glycero-beta-D-manno-heptose. The protein operates within nucleotide-sugar biosynthesis; ADP-L-glycero-beta-D-manno-heptose biosynthesis; ADP-L-glycero-beta-D-manno-heptose from D-glycero-beta-D-manno-heptose 7-phosphate: step 4/4. Catalyzes the interconversion between ADP-D-glycero-beta-D-manno-heptose and ADP-L-glycero-beta-D-manno-heptose via an epimerization at carbon 6 of the heptose. In Haemophilus influenzae (strain 86-028NP), this protein is ADP-L-glycero-D-manno-heptose-6-epimerase.